We begin with the raw amino-acid sequence, 143 residues long: Large ribosomal subunit protein uL11 (143 aa).

It belongs to the universal ribosomal protein uL11 family. As to quaternary structure, part of the ribosomal stalk of the 50S ribosomal subunit. Interacts with L10 and the large rRNA to form the base of the stalk. L10 forms an elongated spine to which L12 dimers bind in a sequential fashion forming a multimeric L10(L12)X complex. Post-translationally, one or more lysine residues are methylated.

In terms of biological role, forms part of the ribosomal stalk which helps the ribosome interact with GTP-bound translation factors. The protein is Large ribosomal subunit protein uL11 of Alkalilimnicola ehrlichii (strain ATCC BAA-1101 / DSM 17681 / MLHE-1).